Here is a 444-residue protein sequence, read N- to C-terminus: Glutamate--tRNA ligase 1 (444 aa).

A 'HIGH' region motif is present at residues 8–18 (PSPTGFLHVGN). A 'KMSKS' region motif is present at residues 239-243 (KISKR). Lys-242 provides a ligand contact to ATP.

The protein belongs to the class-I aminoacyl-tRNA synthetase family. Glutamate--tRNA ligase type 1 subfamily. In terms of assembly, monomer.

The protein localises to the cytoplasm. The enzyme catalyses tRNA(Glu) + L-glutamate + ATP = L-glutamyl-tRNA(Glu) + AMP + diphosphate. Its function is as follows. Catalyzes the attachment of glutamate to tRNA(Glu) in a two-step reaction: glutamate is first activated by ATP to form Glu-AMP and then transferred to the acceptor end of tRNA(Glu). In Zymomonas mobilis subsp. mobilis (strain ATCC 31821 / ZM4 / CP4), this protein is Glutamate--tRNA ligase 1.